The following is a 1630-amino-acid chain: Merozoite surface protein 1 (1630 aa).

The signal sequence occupies residues 1–19; it reads MKIIFFLCSFLFFIINTQC. The interval 60 to 113 is disordered; it reads TKGASAQSGTSGTSGTSGPSGPSGTSPSSRSNTLPRSNTSSGASPPADASDSDA. The tripeptide SG(TP) repeat stretch occupies residues 67–84; the sequence is SGTSGTSGTSGPSGPSGT. A compositionally biased stretch (low complexity) spans 67 to 88; that stretch reads SGTSGTSGTSGPSGPSGTSPSS. The span at 89–98 shows a compositional bias: polar residues; sequence RSNTLPRSNT. N-linked (GlcNAc...) asparagine glycosylation is present at Asn-97. Over residues 99-108 the composition is skewed to low complexity; that stretch reads SSGASPPADA. Residue Asn-259 is glycosylated (N-linked (GlcNAc...) asparagine). Positions 680 to 755 are disordered; it reads KKNIKTEGQS…VPTPPAPVNN (76 aa). 2 stretches are compositionally biased toward polar residues: residues 685–695 and 702–713; these read TEGQSDNSEPS and GQATTKPGQQAG. A compositionally biased stretch (low complexity) spans 721 to 732; sequence VQAQAQEQKQAQ. N-linked (GlcNAc...) asparagine glycans are attached at residues Asn-755, Asn-759, Asn-774, and Asn-835. The segment at 884-906 is disordered; sequence SMQPLSLTPQDKPEVSANDDTSH. Residues Asn-911, Asn-955, Asn-1049, Asn-1156, and Asn-1165 are each glycosylated (N-linked (GlcNAc...) asparagine). A required for binding to host erythrocyte cell membrane region spans residues 993–1107; the sequence is QLSFDLYNKY…EESIQTEDNY (115 aa). Polar residues predominate over residues 1190–1203; it reads VSESGSDTLEQSQP. Positions 1190-1220 are disordered; it reads VSESGSDTLEQSQPKKPASTHVGAESNTITT. Residues Asn-1436 and Asn-1517 are each glycosylated (N-linked (GlcNAc...) asparagine). 2 consecutive EGF-like domains span residues 1521 to 1561 and 1562 to 1610; these read HQCV…VENP and NPTC…FCSS. Intrachain disulfides connect Cys-1523/Cys-1534, Cys-1528/Cys-1544, Cys-1546/Cys-1557, Cys-1565/Cys-1578, Cys-1572/Cys-1592, and Cys-1594/Cys-1608. Ser-1609 carries the GPI-anchor amidated serine lipid modification. The propeptide at 1610-1630 is removed in mature form; the sequence is SSNFLGISFLLILMLILYSFI.

In terms of assembly, forms a complex composed of subunits p83, p30, p38, and p42 which remain non-covalently associated; the complex is formed at the merozoite surface prior to egress from host erythrocytes. Forms a complex composed of processed MSP1 subunits, MSP6 subunit p36 and MSP7; the complex is formed at the merozoite surface prior to egress from host erythrocytes. Within the complex, interacts (via subunit p38) with MSP6 subunit p36 and (via subunits p83, p30 and p38) with MSP7 (via subunit p22). Forms a complex composed of MSP1, MSP6, DBLMSP1 and DBLMSP2. Within the complex, interacts (via subunit p38) with DBLMSP1 and DBLMSP2. Forms a complex composed of MSP1, and rhoptry proteins RhopH3, RAP1 and CLAG9/RhopH3. Within the complex, interacts (via subunits p42 and p19) with RhopH3 (via C-terminus). Forms a complex composed of MSP1, MSP6, MSP7, MSP9 and MSP3; within the complex, MSP6 and MSP9 mediate the binding to the host erythrocyte. Interacts (via subunits p19 and p42) with MSP9; the interaction is direct; MSP1 subunits p19 or p42, and MSP9 form a co-ligand complex that interacts with host SLC4A1/Band 3 protein. May interact with PFD6. Interacts with host spectrin. As to quaternary structure, interacts with host glycophorin GYPA in a sialic acid-independent manner. Interacts with host proinflammatory cytokine S100P; the interaction blocks S100P inflammatory and chemotactic activities. In terms of assembly, interacts with host SLC4A1/Band 3 (via 5ABC region) on the host erythrocyte surface in a sialic acid-independent manner. Post-translationally, the p190 precursor is cleaved by SUB1 prior to merozoite egress into 4 subunits p83, p30, p38, and p42 which remain non-covalently associated. SUB1-mediated proteolytic cleavage occurs in an orderly manner; the first cleavage occurs at the p83/p30 site, followed by cleavage at the p30/p38 site, the last cleavage occurs at the p38/p42 site. The order of cleavage is essential for parasite viability. SUB1-mediated processing is essential for merozoite egress. In a second processing step during erythrocyte invasion, p42 is cleaved by SUB2 into p33 and p19; the latter remains attached to the merozoite surface via its GPI-anchor and stays on the surface during the subsequent ring stage.

The protein localises to the cell membrane. It localises to the secreted. The protein resides in the vacuole membrane. During the asexual blood stage, involved in merozoite egress from host erythrocytes possibly via its interaction with the host cytoskeleton protein spectrin resulting in the destabilization of the host cytoskeleton and thus leading to erythrocyte cell membrane rupture. Involved in the binding to host erythrocytes and is required for host erythrocyte invasion. Its function is as follows. By binding to host proinflammatory cytokine S100P may interfere with host immune responses. Functionally, involved in merozoite invasion of host erythrocytes. May play a role in the biogenesis and/or function of the food vacuole during the intraerythrocytic development. The chain is Merozoite surface protein 1 from Plasmodium falciparum (isolate K1 / Thailand).